The following is a 348-amino-acid chain: Flagellar P-ring protein (348 aa).

The N-terminal stretch at 1–24 is a signal peptide; the sequence is MRRKNNNKIWIWVATLILSISALY.

Belongs to the FlgI family. As to quaternary structure, the basal body constitutes a major portion of the flagellar organelle and consists of four rings (L,P,S, and M) mounted on a central rod.

Its subcellular location is the periplasm. It is found in the bacterial flagellum basal body. Assembles around the rod to form the L-ring and probably protects the motor/basal body from shearing forces during rotation. In Helicobacter hepaticus (strain ATCC 51449 / 3B1), this protein is Flagellar P-ring protein.